We begin with the raw amino-acid sequence, 751 residues long: Semaphorin-3C (751 aa).

The first 21 residues, 1–21 (MAFQAVCILVGVFVCSTYVKG), serve as a signal peptide directing secretion. The Sema domain maps to 28–511 (RVYLTFDELR…SNEGLAQVSL (484 aa)). N-linked (GlcNAc...) asparagine glycosylation is present at Asn81. Cys101 and Cys112 are disulfide-bonded. Asn123 carries an N-linked (GlcNAc...) asparagine glycan. 3 disulfide bridges follow: Cys130–Cys139, Cys266–Cys378, and Cys290–Cys338. Asn268 carries an N-linked (GlcNAc...) asparagine glycan. Residue Asn465 is glycosylated (N-linked (GlcNAc...) asparagine). A disulfide bridge links Cys514 with Cys532. An Ig-like C2-type domain is found at 571-655 (AYRNAAEIVQ…TENSFKQTIA (85 aa)). Asn585 and Asn586 each carry an N-linked (GlcNAc...) asparagine glycan. A disulfide bridge connects residues Cys592 and Cys643. The span at 712–731 (TRQQHQQGEESQKMRGDYGK) shows a compositional bias: basic and acidic residues. The tract at residues 712–751 (TRQQHQQGEESQKMRGDYGKLKALINSRKSRNRRNQLPES) is disordered.

The protein belongs to the semaphorin family. In terms of assembly, interacts with PLXND1.

It localises to the secreted. Its function is as follows. Binds to plexin family members and plays an important role in the regulation of developmental processes. Required for normal cardiovascular development during embryogenesis. Functions as attractant for growing axons, and thereby plays an important role in axon growth and axon guidance. The chain is Semaphorin-3C (SEMA3C) from Bos taurus (Bovine).